Consider the following 318-residue polypeptide: Ferrochelatase (318 aa).

The Fe cation site is built by histidine 194 and glutamate 275.

It belongs to the ferrochelatase family.

It localises to the cytoplasm. The catalysed reaction is heme b + 2 H(+) = protoporphyrin IX + Fe(2+). Its pathway is porphyrin-containing compound metabolism; protoheme biosynthesis; protoheme from protoporphyrin-IX: step 1/1. In terms of biological role, catalyzes the ferrous insertion into protoporphyrin IX. The protein is Ferrochelatase of Xanthomonas axonopodis pv. citri (strain 306).